Here is a 398-residue protein sequence, read N- to C-terminus: LIM domain-binding protein 2 (398 aa).

Disordered regions lie at residues 245-280 (PPAEPTRQTTTKRRKRKNSTNNASNSNAGNNATSAY) and 354-398 (DAAN…QASQ). Over residues 263 to 279 (STNNASNSNAGNNATSA) the composition is skewed to low complexity. Residues 323-362 (DVMVVGEPTLMGGEFGDEDERLITRLENTQYDAANGMDDE) form the LIM interaction domain (LID) domain.

The protein belongs to the LDB family. In terms of tissue distribution, expressed in adult brain, lung, spleen and kidney. Isoform b is generally expressed at a higher level than isoform a.

The protein localises to the nucleus. Functionally, binds to the LIM domain of a wide variety of LIM domain-containing transcription factors. This chain is LIM domain-binding protein 2, found in Xenopus laevis (African clawed frog).